The chain runs to 630 residues: tRNA uridine 5-carboxymethylaminomethyl modification enzyme MnmG (630 aa).

Position 13–18 (13–18) interacts with FAD; it reads GGGHAG. Position 273–287 (273–287) interacts with NAD(+); the sequence is GPRYCPSIEDKVNRF.

Belongs to the MnmG family. Homodimer. Heterotetramer of two MnmE and two MnmG subunits. The cofactor is FAD.

It is found in the cytoplasm. Its function is as follows. NAD-binding protein involved in the addition of a carboxymethylaminomethyl (cmnm) group at the wobble position (U34) of certain tRNAs, forming tRNA-cmnm(5)s(2)U34. This is tRNA uridine 5-carboxymethylaminomethyl modification enzyme MnmG from Saccharophagus degradans (strain 2-40 / ATCC 43961 / DSM 17024).